Reading from the N-terminus, the 262-residue chain is Insulin-like growth factor-binding protein 1 (262 aa).

The first 25 residues, 1 to 25 (MPEVPAVRAWPLLLSLALQLGAAAG), serve as a signal peptide directing secretion. An IGFBP N-terminal domain is found at 28-108 (QPLHCAPCSA…TRGQGACMPA (81 aa)). 6 disulfides stabilise this stretch: Cys-32–Cys-59, Cys-35–Cys-61, Cys-43–Cys-62, Cys-50–Cys-65, Cys-72–Cys-85, and Cys-79–Cys-105. The segment at 101 to 133 (GQGACMPAPSAEATETKDPAAPETTSPESTEMT) is disordered. A compositionally biased stretch (low complexity) spans 121–131 (APETTSPESTE). Residues Ser-126, Ser-129, and Ser-147 each carry the phosphoserine modification. Tyr-161 is subject to Phosphotyrosine. The 79-residue stretch at 176–254 (KEPCQRELYK…STAVRGDPKC (79 aa)) folds into the Thyroglobulin type-1 domain. 3 disulfides stabilise this stretch: Cys-179–Cys-209, Cys-220–Cys-231, and Cys-233–Cys-254. A Phosphoserine modification is found at Ser-245. The Cell attachment site motif lies at 249-251 (RGD).

As to quaternary structure, binds equally well IGF1 and IGF2. Interacts with integrin ITGA5:ITGB1. Interacts with VHL; this interaction inhibits HIF1A degradation.

The protein resides in the secreted. Multifunctional protein that plays a critical role in regulating the availability of IGFs such as IGF1 and IGF2 to their receptors and thereby regulates IGF-mediated cellular processes including cell migration, proliferation, differentiation or apoptosis in a cell-type specific manner. Also plays a positive role in cell migration by interacting with integrin ITGA5:ITGB1 through its RGD motif. Mechanistically, binding to integrins leads to activation of focal adhesion kinase/PTK2 and stimulation of the mitogen-activated protein kinase (MAPK) pathway. Regulates cardiomyocyte apoptosis by suppressing HIF-1alpha/HIF1A degradation through ubiquitination. This chain is Insulin-like growth factor-binding protein 1 (IGFBP1), found in Sus scrofa (Pig).